Consider the following 316-residue polypeptide: Cobalamin biosynthesis protein CobD (316 aa).

5 consecutive transmembrane segments (helical) span residues 45 to 65 (FSPYLFGFFLWLTTVGLALGV), 78 to 100 (PVLYWLVWIYLAYASLAAKSLAF), 151 to 171 (DGVIGPLLCLFLGGPILAMTY), 209 to 229 (LTWLFLILSSQILLLDVKGAL), and 291 to 311 (ISLLYTSTMTGLILFTLFYLV).

This sequence belongs to the CobD/CbiB family.

The protein resides in the cell membrane. It functions in the pathway cofactor biosynthesis; adenosylcobalamin biosynthesis. Converts cobyric acid to cobinamide by the addition of aminopropanol on the F carboxylic group. The polypeptide is Cobalamin biosynthesis protein CobD (Streptococcus sanguinis (strain SK36)).